The sequence spans 383 residues: RNA-binding motif, single-stranded-interacting protein 2 (383 aa).

Met1 bears the N-acetylmethionine mark. Residues Gln28–Ser56 form a disordered region. The span at Ser42–Gly51 shows a compositional bias: gly residues. RRM domains are found at residues Thr58–Gln131 and Thr137–Gly222. At Ser108 the chain carries Phosphoserine. Residue Ser287 is modified to Phosphoserine. Positions Ser352–Lys383 are disordered.

The protein resides in the nucleus. The sequence is that of RNA-binding motif, single-stranded-interacting protein 2 (Rbms2) from Mus musculus (Mouse).